Consider the following 316-residue polypeptide: UDP-N-acetylenolpyruvoylglucosamine reductase (316 aa).

The 199-residue stretch at 27 to 225 (VGGKAERFYR…KTAINALLKK (199 aa)) folds into the FAD-binding PCMH-type domain. Arg-190 is a catalytic residue. Ser-239 functions as the Proton donor in the catalytic mechanism. Residue Glu-309 is part of the active site.

Belongs to the MurB family. FAD serves as cofactor.

The protein localises to the cytoplasm. The enzyme catalyses UDP-N-acetyl-alpha-D-muramate + NADP(+) = UDP-N-acetyl-3-O-(1-carboxyvinyl)-alpha-D-glucosamine + NADPH + H(+). The protein operates within cell wall biogenesis; peptidoglycan biosynthesis. Its function is as follows. Cell wall formation. The polypeptide is UDP-N-acetylenolpyruvoylglucosamine reductase (Coxiella burnetii (strain CbuK_Q154) (Coxiella burnetii (strain Q154))).